Reading from the N-terminus, the 450-residue chain is MTETASRRTLHITTWGCQMNVYDSGRMADVLRPLGYRQVATQDADMVILNTCHIRERASEKLFSELGRLRALKESRGGAMMIAVAGCVAQAEGAEILARAPHVDLVVGSQAYHRLPELIAEIEAKRRAVIDTDFPAAQKFDLLPEDQASQGPIAFLAIQEGCDKFCTFCVVPYTRGAEASRPAAAILAEARRLVAGGAREIALLGQNVNAWHGEAPDGATWNLARLLAELADIDGLARLRYTTSHPRDMDAALIAAHRDNPKLMPFLHLPVQSGSDAILARMNRRHGADLFRRIAGELRAARPDIALSSDFIVGFPGETDADFAATMRLVRETGFALAYSFKYSRRPGTPAADAADQIDEAVKDARLQELQAVLRDQQHAFNRAQVGRSFEVLFTGPGRHPGQSAGRSPYLQPVVVDNADIPPGTLRTVKIVQSNPNSLMASLTQEQIAA.

One can recognise an MTTase N-terminal domain in the interval 8–124 (RTLHITTWGC…LPELIAEIEA (117 aa)). Residues Cys-17, Cys-52, Cys-87, Cys-162, Cys-166, and Cys-169 each coordinate [4Fe-4S] cluster. Residues 148–380 (ASQGPIAFLA…QAVLRDQQHA (233 aa)) enclose the Radical SAM core domain. The 63-residue stretch at 383–445 (RAQVGRSFEV…PNSLMASLTQ (63 aa)) folds into the TRAM domain.

Belongs to the methylthiotransferase family. MiaB subfamily. As to quaternary structure, monomer. The cofactor is [4Fe-4S] cluster.

Its subcellular location is the cytoplasm. The enzyme catalyses N(6)-dimethylallyladenosine(37) in tRNA + (sulfur carrier)-SH + AH2 + 2 S-adenosyl-L-methionine = 2-methylsulfanyl-N(6)-dimethylallyladenosine(37) in tRNA + (sulfur carrier)-H + 5'-deoxyadenosine + L-methionine + A + S-adenosyl-L-homocysteine + 2 H(+). Functionally, catalyzes the methylthiolation of N6-(dimethylallyl)adenosine (i(6)A), leading to the formation of 2-methylthio-N6-(dimethylallyl)adenosine (ms(2)i(6)A) at position 37 in tRNAs that read codons beginning with uridine. The protein is tRNA-2-methylthio-N(6)-dimethylallyladenosine synthase of Acidiphilium cryptum (strain JF-5).